The following is a 428-amino-acid chain: Dihydroorotase (428 aa).

The Zn(2+) site is built by His59 and His61. Substrate-binding positions include 61–63 and Asn93; that span reads HLR. Residues Asp151, His178, and His231 each coordinate Zn(2+). Residue Asn277 participates in substrate binding. Asp304 contributes to the Zn(2+) binding site. The active site involves Asp304. Substrate contacts are provided by residues His308 and 322–323; that span reads FG.

Belongs to the metallo-dependent hydrolases superfamily. DHOase family. Class I DHOase subfamily. Zn(2+) serves as cofactor.

The enzyme catalyses (S)-dihydroorotate + H2O = N-carbamoyl-L-aspartate + H(+). It participates in pyrimidine metabolism; UMP biosynthesis via de novo pathway; (S)-dihydroorotate from bicarbonate: step 3/3. Catalyzes the reversible cyclization of carbamoyl aspartate to dihydroorotate. The polypeptide is Dihydroorotase (Halalkalibacterium halodurans (strain ATCC BAA-125 / DSM 18197 / FERM 7344 / JCM 9153 / C-125) (Bacillus halodurans)).